A 372-amino-acid polypeptide reads, in one-letter code: 4-hydroxy-3-methylbut-2-en-1-yl diphosphate synthase (flavodoxin) (372 aa).

[4Fe-4S] cluster contacts are provided by Cys270, Cys273, Cys305, and Glu312.

It belongs to the IspG family. Requires [4Fe-4S] cluster as cofactor.

The catalysed reaction is (2E)-4-hydroxy-3-methylbut-2-enyl diphosphate + oxidized [flavodoxin] + H2O + 2 H(+) = 2-C-methyl-D-erythritol 2,4-cyclic diphosphate + reduced [flavodoxin]. The protein operates within isoprenoid biosynthesis; isopentenyl diphosphate biosynthesis via DXP pathway; isopentenyl diphosphate from 1-deoxy-D-xylulose 5-phosphate: step 5/6. Converts 2C-methyl-D-erythritol 2,4-cyclodiphosphate (ME-2,4cPP) into 1-hydroxy-2-methyl-2-(E)-butenyl 4-diphosphate. This Salmonella arizonae (strain ATCC BAA-731 / CDC346-86 / RSK2980) protein is 4-hydroxy-3-methylbut-2-en-1-yl diphosphate synthase (flavodoxin).